The sequence spans 197 residues: CASP-like protein 0U1 (197 aa).

The Cytoplasmic portion of the chain corresponds to 1–13; sequence MDDFDPTVTNSPK. The helical transmembrane segment at 14–34 threads the bilayer; sequence FRLIAVQCLFSITAFAAMLSQ. The Extracellular segment spans residues 35–63; the sequence is RHGLAGPDEMTLEECGPQACGYQKFSNFK. A helical transmembrane segment spans residues 64–84; that stretch reads FLIAVCIIYAVFSLVVMAAYL. Over 85 to 99 the chain is Cytoplasmic; it reads LQRVPPPVTELTAYT. The helical transmembrane segment at 100–120 threads the bilayer; that stretch reads VMNVLLFAAFAMSATSCNITI. Over 121–135 the chain is Extracellular; the sequence is VDPVYPVCKRATSAK. Residues 136–156 form a helical membrane-spanning segment; sequence ASIAFAFFTWLAVCFSMLFTY. Topologically, residues 157–197 are cytoplasmic; the sequence is KEWRDVDYHVPGSGAYEFVPGVTSGSSRSSYPPQASSSSYA. The segment at 178–197 is disordered; sequence VTSGSSRSSYPPQASSSSYA. Positions 180–197 are enriched in low complexity; it reads SGSSRSSYPPQASSSSYA.

Belongs to the Casparian strip membrane proteins (CASP) family. As to quaternary structure, homodimer and heterodimers.

The protein localises to the cell membrane. In Micromonas commoda (strain RCC299 / NOUM17 / CCMP2709) (Picoplanktonic green alga), this protein is CASP-like protein 0U1.